A 405-amino-acid polypeptide reads, in one-letter code: Threonine synthase (405 aa).

At K106 the chain carries N6-(pyridoxal phosphate)lysine. Residues N132, 233–237 (GNAGN), and T371 each bind pyridoxal 5'-phosphate.

This sequence belongs to the threonine synthase family. Pyridoxal 5'-phosphate serves as cofactor.

The catalysed reaction is O-phospho-L-homoserine + H2O = L-threonine + phosphate. It functions in the pathway amino-acid biosynthesis; L-threonine biosynthesis; L-threonine from L-aspartate: step 5/5. Functionally, catalyzes the gamma-elimination of phosphate from L-phosphohomoserine and the beta-addition of water to produce L-threonine. This is Threonine synthase (thrC) from Methanocaldococcus jannaschii (strain ATCC 43067 / DSM 2661 / JAL-1 / JCM 10045 / NBRC 100440) (Methanococcus jannaschii).